A 650-amino-acid chain; its full sequence is Chaperone protein DnaK (650 aa).

A Phosphothreonine; by autocatalysis modification is found at T200.

It belongs to the heat shock protein 70 family.

Functionally, acts as a chaperone. The protein is Chaperone protein DnaK of Paraburkholderia phytofirmans (strain DSM 17436 / LMG 22146 / PsJN) (Burkholderia phytofirmans).